Consider the following 323-residue polypeptide: MIVVTGGAGFIGSNIVKALNAQGRTDILVVDNLKNGKKFINIADCDIADYLDKEDFQSRIFAEEGLPDIDCVFHEGACSATTEWDGKYMMDNNYEYSKDLLNYCLNRKIPFLYASSAAVYGDGPTFIEERQYEKPLNVYGYSKFQFDQYVRRILPLAESQVAGFRYFNVYGPREQHKGDMASVAFKLHNQVLAGEKLKLFGAYDGYEAGMQTRDFVFIEDVVNVNLWFMENPEQSGIFNLGPAAAEPFKHIADAVIDFHGQGEIEYIPFPDRLKGAYQSFTQADNTRLRDAGYDKPFHTVSEGVQKYLRWLSDNPRVLDFTKK.

Residues 10 to 11 (FI), 31 to 32 (DN), Lys-38, Lys-53, 75 to 79 (EGACS), and Asn-92 contribute to the NADP(+) site. The active-site Proton acceptor is Tyr-139. Residue Lys-143 coordinates NADP(+). A substrate-binding site is contributed by Asn-168. NADP(+) is bound by residues Val-169 and Lys-177. Lys-177 acts as the Proton acceptor in catalysis. Substrate contacts are provided by residues Asp-179, Lys-186, 200–203 (FGAY), Arg-213, and Tyr-277.

The protein belongs to the NAD(P)-dependent epimerase/dehydratase family. HldD subfamily. As to quaternary structure, homopentamer. NADP(+) serves as cofactor.

The catalysed reaction is ADP-D-glycero-beta-D-manno-heptose = ADP-L-glycero-beta-D-manno-heptose. It participates in nucleotide-sugar biosynthesis; ADP-L-glycero-beta-D-manno-heptose biosynthesis; ADP-L-glycero-beta-D-manno-heptose from D-glycero-beta-D-manno-heptose 7-phosphate: step 4/4. Functionally, catalyzes the interconversion between ADP-D-glycero-beta-D-manno-heptose and ADP-L-glycero-beta-D-manno-heptose via an epimerization at carbon 6 of the heptose. This is ADP-L-glycero-D-manno-heptose-6-epimerase from Hydrogenovibrio crunogenus (strain DSM 25203 / XCL-2) (Thiomicrospira crunogena).